We begin with the raw amino-acid sequence, 787 residues long: Signal transducer and activator of transcription 5B (787 aa).

Y90 bears the Phosphotyrosine mark. S128 carries the phosphoserine modification. Positions 589-686 (WNDGAILGFV…EVYSKYYTPV (98 aa)) constitute an SH2 domain. At Y682 the chain carries Phosphotyrosine. Y699 is modified (phosphotyrosine; by HCK, JAK and PTK6).

It belongs to the transcription factor STAT family. As to quaternary structure, upon activation, forms a homodimer or a heterodimer with a related family member. Binds NR3C1. Interacts with NCOA1. Interacts with NMI. Interacts with SOCS7. Interacts (via SH2 domain) with INSR. Interacts with CPEB3; this inhibits STAT5B-mediated transcriptional activation. Post-translationally, tyrosine phosphorylated in response to signaling via activated KIT, resulting in translocation to the nucleus. Tyrosine phosphorylated in response to signaling via activated FLT3; wild-type FLT3 results in much weaker phosphorylation than constitutively activated mutant FLT3. Alternatively, can be phosphorylated by JAK2. Phosphorylation at Tyr-699 by PTK6 or HCK leads to an increase of its transcriptional activity.

The protein resides in the cytoplasm. Its subcellular location is the nucleus. In terms of biological role, carries out a dual function: signal transduction and activation of transcription. Mediates cellular responses to the cytokine KITLG/SCF and other growth factors. Binds to the GAS element and activates PRL-induced transcription. Positively regulates hematopoietic/erythroid differentiation. This is Signal transducer and activator of transcription 5B (STAT5B) from Sus scrofa (Pig).